The primary structure comprises 4116 residues: Dynein axonemal heavy chain 3 (4116 aa).

2 disordered regions span residues 1–68 (MGAT…ANEE) and 137–172 (VPRD…KEDS). Residues 1-1390 (MGATGRLELT…QVQIITTEAL (1390 aa)) are stem. Residues 145-156 (GLPSSGNRSSSE) show a composition bias toward polar residues. Residues 785 to 852 (DLIKRCSEFE…NKEEELLEKE (68 aa)) adopt a coiled-coil conformation. AAA regions lie at residues 1391-1612 (YGYE…VLTA), 1672-1903 (KVLN…LHCK), 2036-2284 (KVPA…VIQG), and 2395-2646 (EFNN…LRRH). ATP contacts are provided by residues 1429–1436 (GPAGTGKT), 1710–1717 (GDPMGGKT), 2074–2081 (GPTGTGKS), and 2434–2441 (GIGGSGRQ). The segment at 2661–2960 (FKTLLNSKRQ…KDLEENIEIC (300 aa)) is stalk. AAA stretches follow at residues 3045–3275 (LGDP…EISE) and 3488–3712 (VREF…QIQM).

The protein belongs to the dynein heavy chain family. As to quaternary structure, consists of at least two heavy chains and a number of intermediate and light chains. In terms of tissue distribution, expressed primarily in trachea and testis, 2 tissues containing axonemal structures. Also expressed in lung.

Its subcellular location is the cytoplasm. The protein resides in the cytoskeleton. It is found in the cilium axoneme. Functionally, force generating protein of respiratory cilia. Produces force towards the minus ends of microtubules. Dynein has ATPase activity; the force-producing power stroke is thought to occur on release of ADP. Involved in sperm motility; implicated in sperm flagellar assembly. This Homo sapiens (Human) protein is Dynein axonemal heavy chain 3 (DNAH3).